The chain runs to 135 residues: Photosystem II extrinsic protein V (135 aa).

Positions 37, 40, 41, and 92 each coordinate heme c.

It belongs to the cytochrome c family. PsbV subfamily. PSII is composed of 1 copy each of membrane proteins PsbA, PsbB, PsbC, PsbD, PsbE, PsbF, PsbH, PsbI, PsbJ, PsbK, PsbL, PsbM, PsbT, PsbX, PsbY, PsbZ, Psb30/Ycf12, peripheral proteins PsbO, CyanoQ (PsbQ), PsbU, PsbV and a large number of cofactors. It forms dimeric complexes. Heme c is required as a cofactor.

It localises to the cellular thylakoid membrane. In terms of biological role, one of the extrinsic, lumenal subunits of photosystem II (PSII). PSII is a light-driven water plastoquinone oxidoreductase, using light energy to abstract electrons from H(2)O, generating a proton gradient subsequently used for ATP formation. The extrinsic proteins stabilize the structure of photosystem II oxygen-evolving complex (OEC), the ion environment of oxygen evolution and protect the OEC against heat-induced inactivation. Low-potential cytochrome c that plays a role in the OEC of PSII. This is Photosystem II extrinsic protein V from Microcystis aeruginosa.